The following is a 137-amino-acid chain: MQRTLSIIKPDAVKKNVVGKIIDRFESNGLRIAAAKKIKLSKCDAKAFYAVHKDRPFFNDLVDFMVSGPVVVMVLEGENAVAKNRELMGATNPKEAAPGTIRADFADSIDANAVHGSDSLENAVNEINFFFASREIC.

ATP contacts are provided by Lys-9, Phe-57, Arg-85, Thr-91, Arg-102, and Asn-112. His-115 functions as the Pros-phosphohistidine intermediate in the catalytic mechanism.

It belongs to the NDK family. In terms of assembly, homotetramer. Mg(2+) is required as a cofactor.

The protein resides in the cytoplasm. It catalyses the reaction a 2'-deoxyribonucleoside 5'-diphosphate + ATP = a 2'-deoxyribonucleoside 5'-triphosphate + ADP. It carries out the reaction a ribonucleoside 5'-diphosphate + ATP = a ribonucleoside 5'-triphosphate + ADP. Its function is as follows. Major role in the synthesis of nucleoside triphosphates other than ATP. The ATP gamma phosphate is transferred to the NDP beta phosphate via a ping-pong mechanism, using a phosphorylated active-site intermediate. The chain is Nucleoside diphosphate kinase from Campylobacter concisus (strain 13826).